A 233-amino-acid chain; its full sequence is Orotidine 5'-phosphate decarboxylase (233 aa).

Substrate-binding positions include D11, K34, 61 to 70, T117, R179, Q188, G208, and R209; that span reads DLKLHDIPNT. Residue K63 is the Proton donor of the active site.

Belongs to the OMP decarboxylase family. Type 1 subfamily. Homodimer.

It catalyses the reaction orotidine 5'-phosphate + H(+) = UMP + CO2. Its pathway is pyrimidine metabolism; UMP biosynthesis via de novo pathway; UMP from orotate: step 2/2. Functionally, catalyzes the decarboxylation of orotidine 5'-monophosphate (OMP) to uridine 5'-monophosphate (UMP). The polypeptide is Orotidine 5'-phosphate decarboxylase (Streptococcus pneumoniae (strain P1031)).